Here is a 197-residue protein sequence, read N- to C-terminus: Pyridoxal 5'-phosphate synthase subunit PdxT (197 aa).

Residue 52 to 54 (GES) participates in L-glutamine binding. Cys-83 serves as the catalytic Nucleophile. L-glutamine is bound by residues Arg-115 and 142–143 (IR). Active-site charge relay system residues include His-178 and Glu-180.

The protein belongs to the glutaminase PdxT/SNO family. In terms of assembly, in the presence of PdxS, forms a dodecamer of heterodimers. Only shows activity in the heterodimer.

The catalysed reaction is aldehydo-D-ribose 5-phosphate + D-glyceraldehyde 3-phosphate + L-glutamine = pyridoxal 5'-phosphate + L-glutamate + phosphate + 3 H2O + H(+). The enzyme catalyses L-glutamine + H2O = L-glutamate + NH4(+). Its pathway is cofactor biosynthesis; pyridoxal 5'-phosphate biosynthesis. Its function is as follows. Catalyzes the hydrolysis of glutamine to glutamate and ammonia as part of the biosynthesis of pyridoxal 5'-phosphate. The resulting ammonia molecule is channeled to the active site of PdxS. The sequence is that of Pyridoxal 5'-phosphate synthase subunit PdxT from Korarchaeum cryptofilum (strain OPF8).